The primary structure comprises 374 residues: Type II methyltransferase M.NgoFVII (374 aa).

The region spanning 16–344 is the SAM-dependent MTase C5-type domain; it reads PKILSLFSGC…KSILPIFSDN (329 aa). Residue Cys88 is part of the active site.

This sequence belongs to the class I-like SAM-binding methyltransferase superfamily. C5-methyltransferase family.

It carries out the reaction a 2'-deoxycytidine in DNA + S-adenosyl-L-methionine = a 5-methyl-2'-deoxycytidine in DNA + S-adenosyl-L-homocysteine + H(+). Its function is as follows. A methylase, recognizes the double-stranded sequence 5'-GCSGC-3', methylates C-5 on both strands, and protects the DNA from cleavage by the NgoFVII endonuclease. The polypeptide is Type II methyltransferase M.NgoFVII (ngoFVIIM) (Neisseria gonorrhoeae).